We begin with the raw amino-acid sequence, 471 residues long: Zinc finger protein 385B (471 aa).

The tract at residues 1-93 (MNMANFLRGF…TGSTCHTTTL (93 aa)) is required for induction of apoptosis. The segment at 34 to 64 (SFCEVCNIQLNSAAQAQVHSNGKSHRKRVKQ) adopts a Matrin-type 1 zinc-finger fold. Disordered stretches follow at residues 50–92 (QVHS…HTTT) and 175–275 (HYKG…TVVE). A compositionally biased stretch (low complexity) spans 76–92 (ASPSSNSSTGSTCHTTT). The segment at 94 to 471 (PALVRTPTLM…TPASILFAPY (378 aa)) is interaction with p53/TP53. Residues 157 to 187 (ISCNVCQLRFNSDSQAEAHYKGSKHAKKVKA) form a Matrin-type 2 zinc finger. Residues 206–220 (ANPSCSITPITGNNS) are compositionally biased toward polar residues. The segment covering 230 to 250 (KASSSSQPSSSESGSFLLKSG) has biased composition (low complexity). Polar residues predominate over residues 260–269 (TSPSKSTNGA). A Matrin-type 3 zinc finger spans residues 282-316 (KKLLYCSLCKVAVNSLSQLEAHNTGSKHKTMVEAR). The tract at residues 318 to 340 (GAGPIKSYPRPGSRLKMQNGSKG) is disordered. The segment at 348–378 (FHCEICDVHVNSEIQLKQHISSRRHKDRVAG) adopts a Matrin-type 4 zinc-finger fold.

Interacts with p53/TP53; the interaction is direct. As to expression, detected in germinal center of lymph node (at protein level). Expressed in spleen, lymph node and tonsil.

The protein localises to the nucleus. Its function is as follows. May play a role in p53/TP53-mediated apoptosis. This is Zinc finger protein 385B (ZNF385B) from Homo sapiens (Human).